Reading from the N-terminus, the 344-residue chain is Protein RecA (344 aa).

Position 65-72 (65-72) interacts with ATP; that stretch reads GPESSGKT.

It belongs to the RecA family.

It localises to the cytoplasm. Functionally, can catalyze the hydrolysis of ATP in the presence of single-stranded DNA, the ATP-dependent uptake of single-stranded DNA by duplex DNA, and the ATP-dependent hybridization of homologous single-stranded DNAs. It interacts with LexA causing its activation and leading to its autocatalytic cleavage. This Nitratiruptor sp. (strain SB155-2) protein is Protein RecA.